The following is a 474-amino-acid chain: Amidophosphoribosyltransferase (474 aa).

Residues 1–10 (MLGESEVRDK) constitute a propeptide that is removed on maturation. The active-site Nucleophile is C11. The 224-residue stretch at 11-234 (CGIVGIYSQD…PGEILHLNRG (224 aa)) folds into the Glutamine amidotransferase type-2 domain. A [4Fe-4S] cluster-binding site is contributed by C250. Mg(2+) contacts are provided by S297, D359, and D360. 3 residues coordinate [4Fe-4S] cluster: C396, C447, and C450.

This sequence in the C-terminal section; belongs to the purine/pyrimidine phosphoribosyltransferase family. Mg(2+) is required as a cofactor. The cofactor is [4Fe-4S] cluster.

It catalyses the reaction 5-phospho-beta-D-ribosylamine + L-glutamate + diphosphate = 5-phospho-alpha-D-ribose 1-diphosphate + L-glutamine + H2O. Its pathway is purine metabolism; IMP biosynthesis via de novo pathway; N(1)-(5-phospho-D-ribosyl)glycinamide from 5-phospho-alpha-D-ribose 1-diphosphate: step 1/2. Its function is as follows. Catalyzes the formation of phosphoribosylamine from phosphoribosylpyrophosphate (PRPP) and glutamine. This is Amidophosphoribosyltransferase from Methanothermobacter thermautotrophicus (strain ATCC 29096 / DSM 1053 / JCM 10044 / NBRC 100330 / Delta H) (Methanobacterium thermoautotrophicum).